Here is a 109-residue protein sequence, read N- to C-terminus: Small ribosomal subunit protein bS6c (109 aa).

Belongs to the bacterial ribosomal protein bS6 family.

It localises to the plastid. The protein localises to the chloroplast. Functionally, binds together with bS18 to 16S ribosomal RNA. This chain is Small ribosomal subunit protein bS6c, found in Pyropia yezoensis (Susabi-nori).